We begin with the raw amino-acid sequence, 454 residues long: Toluate 1,2-dioxygenase subunit alpha (454 aa).

The 98-residue stretch at 51–148 (IYLAHESQIP…SFDCDGSHDL (98 aa)) folds into the Rieske domain. The [2Fe-2S] cluster site is built by Cys92, His94, Cys112, and His115. 2 residues coordinate Fe cation: His221 and His226.

Belongs to the bacterial ring-hydroxylating dioxygenase alpha subunit family. This dioxygenase system consists of three proteins: the two subunits of the hydroxylase component (XylX and XylY), and an electron transfer component (XylZ). It depends on [2Fe-2S] cluster as a cofactor. The cofactor is Fe cation.

Its pathway is xenobiotic degradation; toluene degradation. In Pseudomonas putida (Arthrobacter siderocapsulatus), this protein is Toluate 1,2-dioxygenase subunit alpha (xylX).